The primary structure comprises 734 residues: Paralemmin-3 (734 aa).

Residues 19 to 64 (SALYRQRLEVIAEKRRLQEEIGAARRELEEEKLRVERLKRKSLRER) adopt a coiled-coil conformation. 2 disordered regions span residues 62-100 (RERW…RNLE) and 114-217 (QSAS…LGVS). Over residues 73–82 (GPERPEEPAS) the composition is skewed to basic and acidic residues. Residues 90–116 (GQAQARIRNLEDSLFSLQSQLQLLQSA) are a coiled coil. Phosphoserine is present on residues Ser139, Ser158, Ser167, Ser170, and Ser172. Polar residues predominate over residues 186–198 (RPSTEAIGTSSEA). Ser270 is subject to Phosphoserine. Positions 297-308 (DVTGESGRDAEA) are enriched in basic and acidic residues. Disordered stretches follow at residues 297-347 (DVTG…PGVE), 374-400 (PQGA…SWEV), and 413-709 (EKGR…YAPA). Thr311 is modified (phosphothreonine). The segment covering 315-336 (RLQEQFEAETCRKEEGASRDSL) has biased composition (basic and acidic residues). 2 positions are modified to phosphoserine: Ser332 and Ser335. Basic and acidic residues-rich tracts occupy residues 413 to 427 (EKGR…REDG), 435 to 452 (TQGR…KDSE), 462 to 484 (DEEK…KGGE), 494 to 531 (LVTE…ESKT), 540 to 561 (IGDK…EKTG), 571 to 582 (EGSKKLLDREAD), 589 to 607 (EVDK…EQGK), and 630 to 647 (DEPR…KQEG). A Phosphoserine modification is found at Ser451. Ser601 is modified (phosphoserine). Residue Ser721 is modified to Phosphoserine. Residues Cys728 and Cys730 are each lipidated (S-palmitoyl cysteine). Cys731 is modified (cysteine methyl ester). The S-farnesyl cysteine moiety is linked to residue Cys731. A propeptide spans 732-734 (VVM) (removed in mature form).

Belongs to the paralemmin family. In terms of assembly, interacts with SIGIRR. In terms of processing, palmitoylated on Cys-728 and Cys-730 and prenylated on Cys-731; which is required for membrane association.

The protein localises to the cytoplasm. The protein resides in the cell membrane. Functionally, ATP-binding protein, which may act as a adapter in the Toll-like receptor (TLR) signaling. The polypeptide is Paralemmin-3 (Palm3) (Mus musculus (Mouse)).